The sequence spans 354 residues: 3'-5' exonuclease (354 aa).

The disordered stretch occupies residues 1-120 (MEKYLIKMPI…PSPEKEKPEK (120 aa)). Over residues 36–50 (TKKDTPKELKDKENA) the composition is skewed to basic and acidic residues. The span at 59-70 (TKGRPGRPAVKR) shows a compositional bias: basic residues. Basic and acidic residues predominate over residues 71–91 (KNLDNPDAKAEKKATEEENPP). Serine 104, serine 110, and serine 112 each carry phosphoserine. A 3'-5' exonuclease domain is found at 146–314 (VLQWVEKQKD…GQVIYRELER (169 aa)). Positions 163, 165, and 301 each coordinate Mg(2+).

The protein belongs to the WRNexo family.

It is found in the nucleus. Has exonuclease activity on both single-stranded and duplex templates bearing overhangs, but not blunt ended duplex DNA, and cleaves in a 3'-5' direction. Essential for the formation of DNA replication focal centers. Has an important role in maintaining genome stability. The chain is 3'-5' exonuclease from Drosophila yakuba (Fruit fly).